The sequence spans 156 residues: Small ribosomal subunit protein uS7 (156 aa).

Belongs to the universal ribosomal protein uS7 family. As to quaternary structure, part of the 30S ribosomal subunit. Contacts proteins S9 and S11.

In terms of biological role, one of the primary rRNA binding proteins, it binds directly to 16S rRNA where it nucleates assembly of the head domain of the 30S subunit. Is located at the subunit interface close to the decoding center, probably blocks exit of the E-site tRNA. This chain is Small ribosomal subunit protein uS7, found in Rhodococcus opacus (strain B4).